A 351-amino-acid polypeptide reads, in one-letter code: Chorismate synthase (351 aa).

Positions 39–60 are disordered; the sequence is EDIQRDLERRRPGKRLTSPRGE. 2 residues coordinate NADP(+): arginine 48 and arginine 53. Residues 124 to 126, alanine 276, 291 to 295, and arginine 317 contribute to the FMN site; these read RSS and KPIPS.

It belongs to the chorismate synthase family. In terms of assembly, homotetramer. It depends on FMNH2 as a cofactor.

The catalysed reaction is 5-O-(1-carboxyvinyl)-3-phosphoshikimate = chorismate + phosphate. It functions in the pathway metabolic intermediate biosynthesis; chorismate biosynthesis; chorismate from D-erythrose 4-phosphate and phosphoenolpyruvate: step 7/7. Its function is as follows. Catalyzes the anti-1,4-elimination of the C-3 phosphate and the C-6 proR hydrogen from 5-enolpyruvylshikimate-3-phosphate (EPSP) to yield chorismate, which is the branch point compound that serves as the starting substrate for the three terminal pathways of aromatic amino acid biosynthesis. This reaction introduces a second double bond into the aromatic ring system. This chain is Chorismate synthase, found in Syntrophobacter fumaroxidans (strain DSM 10017 / MPOB).